Reading from the N-terminus, the 859-residue chain is ATP-dependent DNA helicase PIF1 (859 aa).

Residues 1 to 45 constitute a mitochondrion transit peptide; the sequence is MPKWIRSTLNHIIPRRPFICSFNSFLLLKNVSHAKLSFSMSSRGF. 2 positions are modified to phosphoserine: Ser70 and Ser72. The segment covering 142–157 has biased composition (polar residues); the sequence is NSFDQSSQKKSRSTGF. Residues 142 to 183 form a disordered region; the sequence is NSFDQSSQKKSRSTGFKNPLRPALKKESSFDELQNSSISQER. Position 169 is a phosphoserine (Ser169). Polar residues predominate over residues 172 to 182; that stretch reads DELQNSSISQE. Residue 258–265 coordinates ATP; it reads GSAGTGKS. Phosphoserine is present on Ser584. The DNA-binding element occupies 727–746; sequence QAYVALSRAVSREGLQVLNF. The interval 782 to 859 is disordered; that stretch reads KRKLDYAPGP…GQDTEDHILE (78 aa). The span at 800–809 shows a compositional bias: low complexity; sequence KSNSPAPISA. A compositionally biased stretch (basic and acidic residues) spans 844–859; sequence VSDEPRGQDTEDHILE.

Belongs to the helicase family. PIF1 subfamily. In terms of assembly, monomer in solution. DNA binding induces dimerization. Associates with mitochondrial and telomeric DNA. Binding to mtDNA is non-specific and the protein seems to coat the entire mtDNA molecule. Binds to the telomerase RNA TLC1. Interacts with the mitochondrial single-strand DNA-binding protein RIM1. It depends on Mg(2+) as a cofactor. Mn(2+) is required as a cofactor. Phosphorylated. Undergoes RAD53-dependent phosphorylation in response to loss of mtDNA.

The protein resides in the nucleus. It localises to the nucleolus. The protein localises to the mitochondrion inner membrane. The catalysed reaction is Couples ATP hydrolysis with the unwinding of duplex DNA at the replication fork by translocating in the 5'-3' direction. This creates two antiparallel DNA single strands (ssDNA). The leading ssDNA polymer is the template for DNA polymerase III holoenzyme which synthesizes a continuous strand.. It catalyses the reaction ATP + H2O = ADP + phosphate + H(+). In terms of biological role, DNA-dependent ATPase and 5'-3' DNA helicase required for the maintenance of both mitochondrial and nuclear genome stability. Efficiently unwinds G-quadruplex (G4) DNA structures and forked RNA-DNA hybrids. Appears to move along DNA in single nucleotide or base pair steps, powered by hydrolysis of 1 molecule of ATP. Processes at an unwinding rate of about 75 bp/s. Resolves G4 structures, preventing replication pausing and double-strand breaks (DSBs) at G4 motifs. Involved in the maintenance of telomeric DNA. Inhibits telomere elongation, de novo telomere formation and telomere addition to DSBs via catalytic inhibition of telomerase. Reduces the processivity of telomerase by displacing active telomerase from DNA ends. Releases telomerase by unwinding the short telomerase RNA/telomeric DNA hybrid that is the intermediate in the telomerase reaction. Involved in the maintenance of ribosomal (rDNA). Required for efficient fork arrest at the replication fork barrier within rDNA. Involved in the maintenance of mitochondrial (mtDNA). Required to maintain mtDNA under conditions that introduce dsDNA breaks in mtDNA, either preventing or repairing dsDNA breaks. May inhibit replication progression to allow time for repair. May have a general role in chromosomal replication by affecting Okazaki fragment maturation. May have a role in conjunction with DNA2 helicase/nuclease in 5'-flap extension during Okazaki fragment processing. The protein is ATP-dependent DNA helicase PIF1 of Saccharomyces cerevisiae (strain YJM789) (Baker's yeast).